Here is a 309-residue protein sequence, read N- to C-terminus: Malate dehydrogenase (309 aa).

NAD(+) is bound by residues 9-14 and aspartate 33; that span reads GAGFVG. Positions 82 and 88 each coordinate substrate. NAD(+) contacts are provided by residues asparagine 95 and 118-120; that span reads VNN. Residues asparagine 120 and arginine 151 each coordinate substrate. Residue histidine 175 is the Proton acceptor of the active site.

This sequence belongs to the LDH/MDH superfamily. MDH type 3 family.

The catalysed reaction is (S)-malate + NAD(+) = oxaloacetate + NADH + H(+). Its function is as follows. Catalyzes the reversible oxidation of malate to oxaloacetate. This is Malate dehydrogenase from Chloroflexus aurantiacus (strain ATCC 29364 / DSM 637 / Y-400-fl).